We begin with the raw amino-acid sequence, 78 residues long: Short neurotoxin OH-26 (78 aa).

A signal peptide spans 1–21 (MKNLLLTFLVVTIVCLDLGYT). 4 disulfide bridges follow: Cys-24/Cys-40, Cys-33/Cys-58, Cys-62/Cys-70, and Cys-71/Cys-76.

Belongs to the three-finger toxin family. Short-chain subfamily. As to expression, expressed by the venom gland.

The protein localises to the secreted. In terms of biological role, this three-finger toxin binds and inhibits the nicotinic acetylcholine receptor (nAChR). This is Short neurotoxin OH-26 from Ophiophagus hannah (King cobra).